Here is a 185-residue protein sequence, read N- to C-terminus: Ribosome-recycling factor (185 aa).

Belongs to the RRF family.

The protein localises to the cytoplasm. In terms of biological role, responsible for the release of ribosomes from messenger RNA at the termination of protein biosynthesis. May increase the efficiency of translation by recycling ribosomes from one round of translation to another. In Clostridioides difficile (strain 630) (Peptoclostridium difficile), this protein is Ribosome-recycling factor.